Consider the following 343-residue polypeptide: Aspartate carbamoyltransferase catalytic subunit (343 aa).

Residues R91 and T92 each contribute to the carbamoyl phosphate site. An L-aspartate-binding site is contributed by K119. The carbamoyl phosphate site is built by R141, H171, and Q174. L-aspartate-binding residues include R204 and R259. G300 and P301 together coordinate carbamoyl phosphate.

Belongs to the aspartate/ornithine carbamoyltransferase superfamily. ATCase family. Heterododecamer (2C3:3R2) of six catalytic PyrB chains organized as two trimers (C3), and six regulatory PyrI chains organized as three dimers (R2).

It carries out the reaction carbamoyl phosphate + L-aspartate = N-carbamoyl-L-aspartate + phosphate + H(+). Its pathway is pyrimidine metabolism; UMP biosynthesis via de novo pathway; (S)-dihydroorotate from bicarbonate: step 2/3. Its function is as follows. Catalyzes the condensation of carbamoyl phosphate and aspartate to form carbamoyl aspartate and inorganic phosphate, the committed step in the de novo pyrimidine nucleotide biosynthesis pathway. The chain is Aspartate carbamoyltransferase catalytic subunit from Burkholderia vietnamiensis (strain G4 / LMG 22486) (Burkholderia cepacia (strain R1808)).